A 183-amino-acid polypeptide reads, in one-letter code: Endoribonuclease YbeY (183 aa).

Zn(2+)-binding residues include His118, His122, and His128. Positions 156–183 are disordered; that stretch reads EREQAQRSADSAVLGAVGLEEQDGPGTH.

It belongs to the endoribonuclease YbeY family. The cofactor is Zn(2+).

The protein resides in the cytoplasm. Single strand-specific metallo-endoribonuclease involved in late-stage 70S ribosome quality control and in maturation of the 3' terminus of the 16S rRNA. This is Endoribonuclease YbeY from Saccharopolyspora erythraea (strain ATCC 11635 / DSM 40517 / JCM 4748 / NBRC 13426 / NCIMB 8594 / NRRL 2338).